A 197-amino-acid chain; its full sequence is MSKQVLKAELREQTGKGICRRLRAAGRVPAVVYGKGIAPVSISLGQKELSEAIAGEGGRNHILTLECAGELNGASVIVADLLRDSLKNVPRHVDLHKINLADKVKVHVKLNLVGTPAGVKAGGFLDFAMHEVEVECLPVHIPAHINVDVAELLIGHSVHVGQIVAPIGTAILSDPKASVVSILGRKGAAEEEAAPAA.

Belongs to the bacterial ribosomal protein bL25 family. CTC subfamily. In terms of assembly, part of the 50S ribosomal subunit; part of the 5S rRNA/L5/L18/L25 subcomplex. Contacts the 5S rRNA. Binds to the 5S rRNA independently of L5 and L18.

Its function is as follows. This is one of the proteins that binds to the 5S RNA in the ribosome where it forms part of the central protuberance. The chain is Large ribosomal subunit protein bL25 from Citrifermentans bemidjiense (strain ATCC BAA-1014 / DSM 16622 / JCM 12645 / Bem) (Geobacter bemidjiensis).